The chain runs to 105 residues: UPF0145 protein lpl0253 (105 aa).

Belongs to the UPF0145 family.

The sequence is that of UPF0145 protein lpl0253 from Legionella pneumophila (strain Lens).